A 192-amino-acid polypeptide reads, in one-letter code: Holliday junction branch migration complex subunit RuvA (192 aa).

The domain I stretch occupies residues 1–61; sequence MFEYLKGIVT…DTGITLYGFL (61 aa). Positions 62-137 are domain II; that stretch reads SLEDKELFLK…KLGDYVKKST (76 aa). Positions 137 to 140 are flexible linker; the sequence is TAAA. Positions 141–192 are domain III; sequence DLTPSLQDALLALVALGYTQKEVDRITPKLAKLPENTADGYVKEALALLLKK.

It belongs to the RuvA family. In terms of assembly, homotetramer. Forms an RuvA(8)-RuvB(12)-Holliday junction (HJ) complex. HJ DNA is sandwiched between 2 RuvA tetramers; dsDNA enters through RuvA and exits via RuvB. An RuvB hexamer assembles on each DNA strand where it exits the tetramer. Each RuvB hexamer is contacted by two RuvA subunits (via domain III) on 2 adjacent RuvB subunits; this complex drives branch migration. In the full resolvosome a probable DNA-RuvA(4)-RuvB(12)-RuvC(2) complex forms which resolves the HJ.

Its subcellular location is the cytoplasm. Its function is as follows. The RuvA-RuvB-RuvC complex processes Holliday junction (HJ) DNA during genetic recombination and DNA repair, while the RuvA-RuvB complex plays an important role in the rescue of blocked DNA replication forks via replication fork reversal (RFR). RuvA specifically binds to HJ cruciform DNA, conferring on it an open structure. The RuvB hexamer acts as an ATP-dependent pump, pulling dsDNA into and through the RuvAB complex. HJ branch migration allows RuvC to scan DNA until it finds its consensus sequence, where it cleaves and resolves the cruciform DNA. The protein is Holliday junction branch migration complex subunit RuvA of Lactobacillus johnsonii (strain CNCM I-12250 / La1 / NCC 533).